Reading from the N-terminus, the 146-residue chain is D-aminoacyl-tRNA deacylase (146 aa).

Residues 137-138 carry the Gly-cisPro motif, important for rejection of L-amino acids motif; that stretch reads GP.

This sequence belongs to the DTD family. As to quaternary structure, homodimer.

It localises to the cytoplasm. It catalyses the reaction glycyl-tRNA(Ala) + H2O = tRNA(Ala) + glycine + H(+). The catalysed reaction is a D-aminoacyl-tRNA + H2O = a tRNA + a D-alpha-amino acid + H(+). Functionally, an aminoacyl-tRNA editing enzyme that deacylates mischarged D-aminoacyl-tRNAs. Also deacylates mischarged glycyl-tRNA(Ala), protecting cells against glycine mischarging by AlaRS. Acts via tRNA-based rather than protein-based catalysis; rejects L-amino acids rather than detecting D-amino acids in the active site. By recycling D-aminoacyl-tRNA to D-amino acids and free tRNA molecules, this enzyme counteracts the toxicity associated with the formation of D-aminoacyl-tRNA entities in vivo and helps enforce protein L-homochirality. In Bacillus cereus (strain G9842), this protein is D-aminoacyl-tRNA deacylase.